Here is a 409-residue protein sequence, read N- to C-terminus: Potassium channel subfamily K member 3 (409 aa).

At 1–8 the chain is on the cytoplasmic side; the sequence is MKRQNVRT. A helical membrane pass occupies residues 9-29; the sequence is LALIVCTFTYLLVGAAVFDAL. N53 carries N-linked (GlcNAc...) asparagine glycosylation. An intramembrane region (pore-forming) is located at residues 78–101; that stretch reads WRFAGSFYFAITVITTIGYGHAAP. The chain crosses the membrane as a helical span at residues 108-128; sequence VFCMFYALLGIPLTLVMFQSL. Residues 129 to 158 are Cytoplasmic-facing; that stretch reads GERINTFVRYLLHRAKRGLGMRHAEVSMAN. A helical membrane pass occupies residues 159 to 179; the sequence is MVLIGFVSCISTLCIGAAAFS. The segment at residues 184-207 is an intramembrane region (pore-forming); that stretch reads WTFFQAYYYCFITLTTIGFGDYVA. Residues 223 to 243 form a helical membrane-spanning segment; it reads FSFVYILTGLTVIGAFLNLVV. The Cytoplasmic segment spans residues 244–409; the sequence is LRFMTMNAED…RGLMKRRSSV (166 aa).

Belongs to the two pore domain potassium channel (TC 1.A.1.8) family. As to quaternary structure, homodimer. Heterodimer with KCNK1. Heterodimer with KCNK9. As to expression, very strong expression in heart, also detected in kidney, brain, skin, testis, lung, skeletal muscle, small intestine and stomach. Not detected in liver, thymus or spleen. Expressed in adrenal glands mainly in zona glomerulosa and zona fasciculata of the cortex. Expressed at higher levels in brown and beige than in white adipocytes.

It localises to the cell membrane. It carries out the reaction K(+)(in) = K(+)(out). The enzyme catalyses Na(+)(in) = Na(+)(out). With respect to regulation, activated by halothane and isoflurane. Inhibited by external acidification, diacylglycerol and anandamide. Inactivated by barium. Functionally, k(+) channel that conducts voltage-dependent outward rectifying currents upon membrane depolarization. Voltage sensing is coupled to K(+) electrochemical gradient in an 'ion flux gating' mode where outward but not inward ion flow opens the gate. Changes ion selectivity and becomes permeable to Na(+) ions in response to extracellular acidification. Protonation of the pH sensor His-98 stabilizes C-type inactivation conformation likely converting the channel from outward K(+)-conducting, to inward Na(+)-conducting to nonconductive state. Homo- and heterodimerizes to form functional channels with distinct regulatory and gating properties. Allows K(+) currents with fast-gating kinetics important for the repolarization and hyperpolarization phases of action potentials. In cerebellar granule cells, heteromeric KCNK3:KCNK9 channel may hyperpolarize the resting membrane potential to limit intrinsic neuronal excitability, but once the action potential threshold is reached, it may support high-frequency action potential firing and increased neuronal excitability. Dispensable for central chemosensory respiration i.e. breathing controlled by brainstem CO2/pH, it rather conducts pH-sensitive currents and controls the firing rate of serotonergic raphe neurons involved in potentiation of the respiratory chemoreflex. Additionally, imparts chemosensitivity to type 1 cells in carotid bodies which respond to a decrease in arterial oxygen pressure or an increase in carbon dioxide pressure or pH to initiate adaptive changes in pulmonary ventilation. In adrenal gland, contributes to the maintenance of a hyperpolarized resting membrane potential of aldosterone-producing cells at zona glomerulosa and limits aldosterone release as part of a regulatory mechanism that controls arterial blood pressure and electrolyte homeostasis. In brown adipocytes, mediates K(+) efflux that counteracts norepinephrine-induced membrane depolarization, limits Ca(2+) efflux and downstream cAMP and PKA signaling, ultimately attenuating lipid oxidation and adaptive thermogenesis. The sequence is that of Potassium channel subfamily K member 3 from Mus musculus (Mouse).